A 310-amino-acid chain; its full sequence is Homoserine kinase (310 aa).

91 to 101 (PIGSGLGSSAC) is a binding site for ATP.

This sequence belongs to the GHMP kinase family. Homoserine kinase subfamily.

It is found in the cytoplasm. It carries out the reaction L-homoserine + ATP = O-phospho-L-homoserine + ADP + H(+). The protein operates within amino-acid biosynthesis; L-threonine biosynthesis; L-threonine from L-aspartate: step 4/5. Functionally, catalyzes the ATP-dependent phosphorylation of L-homoserine to L-homoserine phosphate. This Shigella sonnei (strain Ss046) protein is Homoserine kinase.